Here is a 1207-residue protein sequence, read N- to C-terminus: DNA-directed RNA polymerase, mitochondrial (1207 aa).

The transit peptide at 1–41 (MSALRWTRSAAGLGRVLRSPGPHRPPSEEGTFGGFCSSRRS) directs the protein to the mitochondrion. Disordered regions lie at residues 1–48 (MSAL…SPRE) and 82–103 (KKVQVDRPPQGHSSRWAQKLEA). 2 PPR repeats span residues 232–266 (TLHMYNTVMLGWARKGSFRELVYVFLMLKDAGLSP) and 267–302 (DLCSYAAALQCMGRRDQDVRTIQRCLKQMMEEGFQP). The tract at residues 702 to 724 (VPPPRSEAPRPARYQLPPGSTPV) is disordered. A mediates interaction with TEFM region spans residues 773-1207 (FRGRTYPCPP…QVIRSTYFFS (435 aa)). Residues Asp-893, Lys-962, and Asp-1121 contribute to the active site.

This sequence belongs to the phage and mitochondrial RNA polymerase family. In terms of assembly, homodimer. Component of the mitochondrial transcription initiation complex, composed at least of TFB2M, TFAM and POLRMT. In this complex TFAM recruits POLRMT to the promoter whereas TFB2M induces structural changes in POLRMT to enable promoter opening and trapping of the DNA non-template strand. Upon metabolic stress, forms a complex composed of FOXO3, SIRT3 and mitochondrial RNA polymerase POLRMT; the complex is recruited to mtDNA in a SIRT3-dependent manner. Also forms a complex composed of FOXO3, SIRT3, TFAM and POLRMT. Interacts with TFB1M and TFB2M, leading to the stimulation of transcription. Interacts with TEFM. Interacts with MTRES1.

Its subcellular location is the mitochondrion. It catalyses the reaction RNA(n) + a ribonucleoside 5'-triphosphate = RNA(n+1) + diphosphate. Functionally, DNA-dependent RNA polymerase catalyzes the transcription of mitochondrial DNA into RNA using the four ribonucleoside triphosphates as substrates. Component of the mitochondrial transcription initiation complex, composed at least of TFB2M, TFAM and POLRMT that is required for basal transcription of mitochondrial DNA. In this complex, TFAM recruits POLRMT to a specific promoter whereas TFB2M induces structural changes in POLRMT to enable promoter opening and trapping of the DNA non-template strand. Has DNA primase activity. Catalyzes the synthesis of short RNA primers that are necessary for the initiation of lagging-strand DNA synthesis from the origin of light-strand DNA replication (OriL). The chain is DNA-directed RNA polymerase, mitochondrial from Mus musculus (Mouse).